We begin with the raw amino-acid sequence, 397 residues long: Enoyl-[acyl-carrier-protein] reductase [NADH] (397 aa).

NAD(+)-binding positions include 48–53 (GASTGY), 74–75 (FE), 111–112 (DA), and 139–140 (LA). Tyrosine 225 serves as a coordination point for substrate. Tyrosine 235 serves as the catalytic Proton donor. NAD(+) is bound by residues lysine 244 and 273-275 (VVT).

Belongs to the TER reductase family. Monomer.

It carries out the reaction a 2,3-saturated acyl-[ACP] + NAD(+) = a (2E)-enoyl-[ACP] + NADH + H(+). The protein operates within lipid metabolism; fatty acid biosynthesis. Involved in the final reduction of the elongation cycle of fatty acid synthesis (FAS II). Catalyzes the reduction of a carbon-carbon double bond in an enoyl moiety that is covalently linked to an acyl carrier protein (ACP). The polypeptide is Enoyl-[acyl-carrier-protein] reductase [NADH] (Edwardsiella ictaluri (strain 93-146)).